Here is a 230-residue protein sequence, read N- to C-terminus: Transmembrane protein 221 (230 aa).

The next 4 membrane-spanning stretches (helical) occupy residues 12–32 (AMTL…QLLF), 73–93 (ALAA…ALCG), 125–145 (LFCC…LLLF), and 147–167 (IEAG…LVAI). Positions 184 to 230 (RELSPPSFEDEPARPSEDSKSGCRAQPPQDEETETPIGAVTHQGSHF) are disordered. The segment covering 194–204 (EPARPSEDSKS) has biased composition (basic and acidic residues).

The protein localises to the membrane. The polypeptide is Transmembrane protein 221 (Tmem221) (Mus musculus (Mouse)).